A 667-amino-acid chain; its full sequence is METLESELTCPICLELFEDPLLLPCAHSLCFNCAHRILVSHCATNESVESITAFQCPTCRHVITLSQRGLDGLKRNVTLQNIIDRFQKASVSGPNSPSETRRERAFDANTMTSAEKVLCQFCDQDPAQDAVKTCVTCEVSYCDECLKATHPNKKPFTGHRLIEPIPDSHIRGLMCLEHEDEKVNMYCVTDDQLICALCKLVGRHRDHQVAALSERYDKLKQNLESNLTNLIKRNTELETLLAKLIQTCQHVEVNASRQEAKLTEECDLLIEIIQQRRQIIGTKIKEGKVMRLRKLAQQIANCKQCIERSASLISQAEHSLKENDHARFLQTAKNITERVSMATASSQVLIPEINLNDTFDTFALDFSREKKLLECLDYLTAPNPPTIREELCTASYDTITVHWTSDDEFSVVSYELQYTIFTGQANVVSLCNSADSWMIVPNIKQNHYTVHGLQSGTKYIFMVKAINQAGSRSSEPGKLKTNSQPFKLDPKSAHRKLKVSHDNLTVERDESSSKKSHTPERFTSQGSYGVAGNVFIDSGRHYWEVVISGSTWYAIGLAYKSAPKHEWIGKNSASWALCRCNNNWVVRHNSKEIPIEPAPHLRRVGILLDYDNGSIAFYDALNSIHLYTFDVAFAQPVCPTFTVWNKCLTIITGLPIPDHLDCTEQLP.

The RING-type zinc-finger motif lies at 10 to 60; that stretch reads CPICLELFEDPLLLPCAHSLCFNCAHRILVSHCATNESVESITAFQCPTCR. 2 positions are modified to phosphoserine: S92 and S96. 2 consecutive B box-type zinc fingers follow at residues 116 to 165 and 172 to 212; these read KVLC…IEPI and GLMC…VAAL. Zn(2+)-binding residues include C119, C122, C134, C137, C142, C145, H150, H159, C175, H178, C198, and H204. The stretch at 205 to 264 forms a coiled coil; it reads RDHQVAALSERYDKLKQNLESNLTNLIKRNTELETLLAKLIQTCQHVEVNASRQEAKLTE. The region spanning 320-379 is the COS domain; sequence LKENDHARFLQTAKNITERVSMATASSQVLIPEINLNDTFDTFALDFSREKKLLECLDYL. Residues 381–484 enclose the Fibronectin type-III domain; sequence APNPPTIREE…EPGKLKTNSQ (104 aa). A compositionally biased stretch (polar residues) spans 471–485; the sequence is SRSSEPGKLKTNSQP. Positions 471-524 are disordered; the sequence is SRSSEPGKLKTNSQPFKLDPKSAHRKLKVSHDNLTVERDESSSKKSHTPERFTS. The B30.2/SPRY domain occupies 482-659; that stretch reads NSQPFKLDPK…IITGLPIPDH (178 aa). Residues 499 to 520 are compositionally biased toward basic and acidic residues; that stretch reads VSHDNLTVERDESSSKKSHTPE. At S511 the chain carries Phosphoserine.

The protein belongs to the TRIM/RBCC family. Homodimer or heterodimer with MID2. Interacts with IGBP1. Interacts with TRIM16. Phosphorylated on serine and threonine residues. As to expression, in the fetus, highest expression found in kidney, followed by brain and lung. Expressed at low levels in fetal liver. In the adult, most abundant in heart, placenta and brain.

It is found in the cytoplasm. The protein resides in the cytoskeleton. The protein localises to the spindle. It catalyses the reaction S-ubiquitinyl-[E2 ubiquitin-conjugating enzyme]-L-cysteine + [acceptor protein]-L-lysine = [E2 ubiquitin-conjugating enzyme]-L-cysteine + N(6)-ubiquitinyl-[acceptor protein]-L-lysine.. In terms of biological role, has E3 ubiquitin ligase activity towards IGBP1, promoting its monoubiquitination, which results in deprotection of the catalytic subunit of protein phosphatase PP2A, and its subsequent degradation by polyubiquitination. The sequence is that of E3 ubiquitin-protein ligase Midline-1 (MID1) from Homo sapiens (Human).